The following is a 117-amino-acid chain: MTAELPPQIQNQIAQLQQIQQQIQALAMQKSQVEAMQKESKMALDELGRLADDAVVYRNVGELVIKTSKEESITKLKDREETLSLRLQSISRQEERLTSRFKQLQEQIQQALGPRAQ.

Belongs to the prefoldin subunit beta family. Heterohexamer of two alpha and four beta subunits.

The protein resides in the cytoplasm. Functionally, molecular chaperone capable of stabilizing a range of proteins. Seems to fulfill an ATP-independent, HSP70-like function in archaeal de novo protein folding. The sequence is that of Prefoldin subunit beta from Methanosarcina barkeri (strain Fusaro / DSM 804).